The following is a 410-amino-acid chain: Elongation factor Tu, chloroplastic (410 aa).

Positions 10–215 (KPHINIGTIG…MVDKYFPTPE (206 aa)) constitute a tr-type G domain. The segment at 19–26 (GHVDHGKT) is G1. 19–26 (GHVDHGKT) is a binding site for GTP. Position 26 (Thr26) interacts with Mg(2+). The tract at residues 61 to 65 (GITIN) is G2. The tract at residues 82 to 85 (DCPG) is G3. GTP contacts are provided by residues 82-86 (DCPGH) and 137-140 (NKAD). Residues 137-140 (NKAD) are G4. The G5 stretch occupies residues 175–177 (SAL).

This sequence belongs to the TRAFAC class translation factor GTPase superfamily. Classic translation factor GTPase family. EF-Tu/EF-1A subfamily.

The protein resides in the plastid. It localises to the chloroplast. The catalysed reaction is GTP + H2O = GDP + phosphate + H(+). GTP hydrolase that promotes the GTP-dependent binding of aminoacyl-tRNA to the A-site of ribosomes during protein biosynthesis. This Cyanidium caldarium (Red alga) protein is Elongation factor Tu, chloroplastic (tufA).